Reading from the N-terminus, the 361-residue chain is Probable U3 small nucleolar RNA-associated protein 11 (361 aa).

4 disordered regions span residues 1 to 52 (MTKG…KKRK), 200 to 235 (LMSG…TPET), 262 to 295 (KRES…TRLL), and 311 to 361 (RHVR…RRAR). Residues 17-33 (HLKRKTHLERSQPKSRQ) are compositionally biased toward basic residues. 2 stretches are compositionally biased toward basic and acidic residues: residues 37 to 46 (QLEKHKDHVL) and 217 to 228 (RREVQEKMRRSG). The span at 278-287 (DDGEQEEAAA) shows a compositional bias: acidic residues. Basic and acidic residues predominate over residues 342–352 (RQMEQRRESRF).

This sequence belongs to the UTP11 family. In terms of assembly, component of the ribosomal small subunit (SSU) processome.

The protein resides in the nucleus. Its subcellular location is the nucleolus. In terms of biological role, involved in nucleolar processing of pre-18S ribosomal RNA. This is Probable U3 small nucleolar RNA-associated protein 11 from Leishmania major.